Consider the following 725-residue polypeptide: Kinesin-like protein KIF2C (725 aa).

Ala2 bears the N-acetylalanine mark. The segment at 2 to 254 (AMDSSLQARL…CHPLTMTDPI (253 aa)) is globular. Ser6 and Ser22 each carry phosphoserine. Positions 89–116 (QKQKRRSVNSKIPAPKESLRSRSTRMST) are disordered. Ser95 carries the post-translational modification Phosphoserine; by AURKB. The short motif at 98 to 101 (SKIP) is the Microtubule tip localization signal element. A phosphoserine mark is found at Ser106, Ser109, Ser111, Ser115, Ser166, Ser175, Ser187, and Ser192. Positions 207 to 238 (EKKAQNSEMRMKRAQEYDSSFPNWEFARMIKE) are negative regulator of microtubule-binding. Positions 258–588 (RICVCVRKRP…LRYADRVKEL (331 aa)) constitute a Kinesin motor domain. Residues Arg264 and 348–355 (GQTGSGKT) each bind ATP. A Nuclear localization signal motif is present at residues 415–418 (KKAK). Residues Ser519, Ser621, and Ser633 each carry the phosphoserine modification. Residues 618 to 658 (GNLSKEEEELSSQMSSFNEAMTQIRELEEKAMEELKEIIQQ) adopt a coiled-coil conformation.

This sequence belongs to the TRAFAC class myosin-kinesin ATPase superfamily. Kinesin family. MCAK/KIF2 subfamily. In terms of assembly, interacts with CENPH. Interacts with MTUS2/TIP150; the interaction is direct. Interacts with MAPRE1; the interaction is direct, regulated by phosphorylation and is probably required for targeting to growing microtubule plus ends. Interacts with KIF18B at microtubule tips; this interaction increases the affinity of both partners for microtubule plus ends and is required for robust microtubule depolymerization. Phosphorylation by AURKA or AURKB strongly reduces KIF18B-binding. In terms of processing, phosphorylation by AURKB, regulates association with centromeres and kinetochores and the microtubule depolymerization activity. Ubiquitinated. In terms of tissue distribution, expressed at high levels in thymus and testis, at low levels in small intestine, the mucosal lining of colon, and placenta, and at very low levels in spleen and ovary; expression is not detected in prostate, peripheral blood Leukocytes, heart, brain, lung, liver, skeletal muscle, kidney or pancreas. Isoform 2 is testis-specific.

It localises to the cytoplasm. Its subcellular location is the cytoskeleton. The protein localises to the nucleus. It is found in the chromosome. The protein resides in the centromere. It localises to the kinetochore. Its function is as follows. In complex with KIF18B, constitutes the major microtubule plus-end depolymerizing activity in mitotic cells. Regulates the turnover of microtubules at the kinetochore and functions in chromosome segregation during mitosis. Plays a role in chromosome congression and is required for the lateral to end-on conversion of the chromosome-microtubule attachment. The sequence is that of Kinesin-like protein KIF2C (KIF2C) from Homo sapiens (Human).